The primary structure comprises 132 residues: Small ribosomal subunit protein uS8 (132 aa).

It belongs to the universal ribosomal protein uS8 family. In terms of assembly, part of the 30S ribosomal subunit. Contacts proteins S5 and S12.

Its function is as follows. One of the primary rRNA binding proteins, it binds directly to 16S rRNA central domain where it helps coordinate assembly of the platform of the 30S subunit. The sequence is that of Small ribosomal subunit protein uS8 from Brucella anthropi (strain ATCC 49188 / DSM 6882 / CCUG 24695 / JCM 21032 / LMG 3331 / NBRC 15819 / NCTC 12168 / Alc 37) (Ochrobactrum anthropi).